A 68-amino-acid polypeptide reads, in one-letter code: Large ribosomal subunit protein uL30 (68 aa).

It belongs to the universal ribosomal protein uL30 family. In terms of assembly, part of the 50S ribosomal subunit.

In Pseudarthrobacter chlorophenolicus (strain ATCC 700700 / DSM 12829 / CIP 107037 / JCM 12360 / KCTC 9906 / NCIMB 13794 / A6) (Arthrobacter chlorophenolicus), this protein is Large ribosomal subunit protein uL30.